The chain runs to 106 residues: Putative membrane protein insertion efficiency factor (106 aa).

The protein belongs to the UPF0161 family.

It localises to the cell inner membrane. Functionally, could be involved in insertion of integral membrane proteins into the membrane. This chain is Putative membrane protein insertion efficiency factor, found in Acinetobacter baumannii (strain AB307-0294).